A 244-amino-acid chain; its full sequence is Phosphoadenosine 5'-phosphosulfate reductase (244 aa).

The Nucleophile; cysteine thiosulfonate intermediate role is filled by Cys-239.

Belongs to the PAPS reductase family. CysH subfamily.

The protein resides in the cytoplasm. The enzyme catalyses [thioredoxin]-disulfide + sulfite + adenosine 3',5'-bisphosphate + 2 H(+) = [thioredoxin]-dithiol + 3'-phosphoadenylyl sulfate. The protein operates within sulfur metabolism; hydrogen sulfide biosynthesis; sulfite from sulfate: step 3/3. Catalyzes the formation of sulfite from phosphoadenosine 5'-phosphosulfate (PAPS) using thioredoxin as an electron donor. The polypeptide is Phosphoadenosine 5'-phosphosulfate reductase (Shigella flexneri serotype 5b (strain 8401)).